The following is a 257-amino-acid chain: UPF0246 protein YaaA (257 aa).

It belongs to the UPF0246 family.

The protein is UPF0246 protein YaaA of Salmonella arizonae (strain ATCC BAA-731 / CDC346-86 / RSK2980).